Consider the following 357-residue polypeptide: METVRRKLEHIEICLKKEVVSKYRPFDDLILLHRALPEIDESDVCTECTFLNRRLSAPLIISAMTGGHPDAREINANLATAAQETGIAIGVGSQRAALEHPDLEDTFSVVRELAPDVPVIGNIGAVQLHRYGPEVLDRVAEMVDADAVAVHLNFLQESVQPEGERHAAGVLGSLREARFRLPIIIKETGCGIPFEDARMLVDSGIQLIDVAGTGGTSWSMVESYRAELRGDPESKEIGMLFAEWGIPTPVSVIECSRAGAQVISSGGVRSGIDVARSIALGAFMAGAALPLLAPATRGSVDVVRVLQRFVRELRISMFLTGSRSLQELSRAPVIITGRTREILEQRGIDTKIFSSKR.

Residue 6 to 7 (RK) coordinates substrate. FMN contacts are provided by residues serine 62, 63 to 65 (AMT), serine 93, and asparagine 122. 93 to 95 (SQR) is a substrate binding site. Glutamine 156 lines the substrate pocket. Glutamate 157 is a binding site for Mg(2+). FMN contacts are provided by residues lysine 186, threonine 216, 267–269 (GVR), and 288–289 (AL).

This sequence belongs to the IPP isomerase type 2 family. As to quaternary structure, homooctamer. Dimer of tetramers. Requires FMN as cofactor. The cofactor is NADPH. Mg(2+) is required as a cofactor.

It is found in the cytoplasm. The catalysed reaction is isopentenyl diphosphate = dimethylallyl diphosphate. In terms of biological role, involved in the biosynthesis of isoprenoids. Catalyzes the 1,3-allylic rearrangement of the homoallylic substrate isopentenyl (IPP) to its allylic isomer, dimethylallyl diphosphate (DMAPP). The polypeptide is Isopentenyl-diphosphate delta-isomerase (Methanothrix thermoacetophila (strain DSM 6194 / JCM 14653 / NBRC 101360 / PT) (Methanosaeta thermophila)).